The primary structure comprises 176 residues: Cytidylate kinase (176 aa).

7-15 is a binding site for ATP; that stretch reads GPPGSGTTS.

It belongs to the cytidylate kinase family. Type 2 subfamily.

It is found in the cytoplasm. The catalysed reaction is CMP + ATP = CDP + ADP. It carries out the reaction dCMP + ATP = dCDP + ADP. This chain is Cytidylate kinase, found in Methanosphaerula palustris (strain ATCC BAA-1556 / DSM 19958 / E1-9c).